We begin with the raw amino-acid sequence, 346 residues long: Dihydroorotase (346 aa).

The Zn(2+) site is built by His14 and His16. Substrate is bound by residues 16–18 and Asn42; that span reads HLR. Positions 100, 137, and 175 each coordinate Zn(2+). Lys100 is modified (N6-carboxylysine). His137 contributes to the substrate binding site. Substrate is bound at residue Leu220. Position 248 (Asp248) interacts with Zn(2+). Asp248 is a catalytic residue. Positions 252 and 264 each coordinate substrate.

This sequence belongs to the metallo-dependent hydrolases superfamily. DHOase family. Class II DHOase subfamily. In terms of assembly, homodimer. Zn(2+) is required as a cofactor.

The enzyme catalyses (S)-dihydroorotate + H2O = N-carbamoyl-L-aspartate + H(+). Its pathway is pyrimidine metabolism; UMP biosynthesis via de novo pathway; (S)-dihydroorotate from bicarbonate: step 3/3. In terms of biological role, catalyzes the reversible cyclization of carbamoyl aspartate to dihydroorotate. This Novosphingobium aromaticivorans (strain ATCC 700278 / DSM 12444 / CCUG 56034 / CIP 105152 / NBRC 16084 / F199) protein is Dihydroorotase.